The following is a 271-amino-acid chain: Probable septum site-determining protein MinC (271 aa).

The segment at 106 to 125 (RRAPSPKAADDAPAQPEEPR) is disordered. A compositionally biased stretch (low complexity) spans 110 to 119 (SPKAADDAPA).

The protein belongs to the MinC family. As to quaternary structure, interacts with MinD and FtsZ.

Functionally, cell division inhibitor that blocks the formation of polar Z ring septums. Rapidly oscillates between the poles of the cell to destabilize FtsZ filaments that have formed before they mature into polar Z rings. Prevents FtsZ polymerization. The polypeptide is Probable septum site-determining protein MinC (Burkholderia thailandensis (strain ATCC 700388 / DSM 13276 / CCUG 48851 / CIP 106301 / E264)).